The chain runs to 188 residues: Ribosome maturation factor RimM (188 aa).

The PRC barrel domain maps to 112–187 (SDSYYWVDLI…LLTLDWQSDW (76 aa)).

This sequence belongs to the RimM family. Binds ribosomal protein uS19.

It localises to the cytoplasm. Functionally, an accessory protein needed during the final step in the assembly of 30S ribosomal subunit, possibly for assembly of the head region. Essential for efficient processing of 16S rRNA. May be needed both before and after RbfA during the maturation of 16S rRNA. It has affinity for free ribosomal 30S subunits but not for 70S ribosomes. The protein is Ribosome maturation factor RimM of Polynucleobacter asymbioticus (strain DSM 18221 / CIP 109841 / QLW-P1DMWA-1) (Polynucleobacter necessarius subsp. asymbioticus).